A 380-amino-acid chain; its full sequence is 8-amino-7-oxononanoate synthase (380 aa).

R26 contacts substrate. G104 to Y105 serves as a coordination point for pyridoxal 5'-phosphate. Position 129 (H129) interacts with substrate. Residues S175, D200–H203, and T232–K235 contribute to the pyridoxal 5'-phosphate site. K235 bears the N6-(pyridoxal phosphate)lysine mark. T345 contacts substrate.

This sequence belongs to the class-II pyridoxal-phosphate-dependent aminotransferase family. BioF subfamily. In terms of assembly, homodimer. The cofactor is pyridoxal 5'-phosphate.

It catalyses the reaction 6-carboxyhexanoyl-[ACP] + L-alanine + H(+) = (8S)-8-amino-7-oxononanoate + holo-[ACP] + CO2. The protein operates within cofactor biosynthesis; biotin biosynthesis. Catalyzes the decarboxylative condensation of pimeloyl-[acyl-carrier protein] and L-alanine to produce 8-amino-7-oxononanoate (AON), [acyl-carrier protein], and carbon dioxide. The chain is 8-amino-7-oxononanoate synthase from Mycolicibacterium gilvum (strain PYR-GCK) (Mycobacterium gilvum (strain PYR-GCK)).